Here is a 968-residue protein sequence, read N- to C-terminus: Isoleucine--tRNA ligase (968 aa).

The short motif at 68 to 78 (PYANGALHMGH) is the 'HIGH' region element. Glutamate 582 provides a ligand contact to L-isoleucyl-5'-AMP. The 'KMSKS' region motif lies at 623-627 (KMSKS). ATP is bound at residue lysine 626. The Zn(2+) site is built by cysteine 936, cysteine 939, cysteine 956, and cysteine 959.

It belongs to the class-I aminoacyl-tRNA synthetase family. IleS type 1 subfamily. Monomer. It depends on Zn(2+) as a cofactor.

The protein localises to the cytoplasm. It catalyses the reaction tRNA(Ile) + L-isoleucine + ATP = L-isoleucyl-tRNA(Ile) + AMP + diphosphate. Catalyzes the attachment of isoleucine to tRNA(Ile). As IleRS can inadvertently accommodate and process structurally similar amino acids such as valine, to avoid such errors it has two additional distinct tRNA(Ile)-dependent editing activities. One activity is designated as 'pretransfer' editing and involves the hydrolysis of activated Val-AMP. The other activity is designated 'posttransfer' editing and involves deacylation of mischarged Val-tRNA(Ile). The chain is Isoleucine--tRNA ligase from Prochlorococcus marinus (strain MIT 9312).